A 294-amino-acid polypeptide reads, in one-letter code: uncharacterized protein (294 aa).

Residues 5-25 (ILIILIIIIIVIISLIYLKNF) traverse the membrane as a helical segment. 4 N-linked (GlcNAc...) asparagine; by host glycosylation sites follow: N151, N170, N205, and N271.

Its subcellular location is the membrane. This is an uncharacterized protein from Acanthamoeba polyphaga (Amoeba).